Here is a 221-residue protein sequence, read N- to C-terminus: Flagellar L-ring protein 1 (221 aa).

The first 16 residues, 1 to 16, serve as a signal peptide directing secretion; sequence MKRFLILTPMVLALCG. Residue Cys17 is the site of N-palmitoyl cysteine attachment. Cys17 is lipidated: S-diacylglycerol cysteine.

The protein belongs to the FlgH family. The basal body constitutes a major portion of the flagellar organelle and consists of four rings (L,P,S, and M) mounted on a central rod.

Its subcellular location is the cell outer membrane. It is found in the bacterial flagellum basal body. Assembles around the rod to form the L-ring and probably protects the motor/basal body from shearing forces during rotation. In Yersinia pestis, this protein is Flagellar L-ring protein 1.